The sequence spans 120 residues: UPF0102 protein TWT_455 (120 aa).

Belongs to the UPF0102 family.

This chain is UPF0102 protein TWT_455, found in Tropheryma whipplei (strain Twist) (Whipple's bacillus).